A 311-amino-acid chain; its full sequence is Cytosolic Fe-S cluster assembly factor Nubp1 homolog (311 aa).

The disordered stretch occupies residues 1–21 (MQAPPPEHCPGVESEEAGKGS). 4 residues coordinate [4Fe-4S] cluster: Cys-9, Cys-23, Cys-26, and Cys-32. ATP is bound at residue 63–70 (GKGGVGKS). Residues Cys-240 and Cys-243 each contribute to the [4Fe-4S] cluster site.

It belongs to the Mrp/NBP35 ATP-binding proteins family. NUBP1/NBP35 subfamily. As to quaternary structure, heterotetramer of 2 Nubp1 and 2 Nubp2 chains. Requires [4Fe-4S] cluster as cofactor.

It localises to the cytoplasm. In terms of biological role, component of the cytosolic iron-sulfur (Fe/S) protein assembly (CIA) machinery. Required for maturation of extramitochondrial Fe-S proteins. The Nubp1-Nubp2 heterotetramer forms a Fe-S scaffold complex, mediating the de novo assembly of an Fe-S cluster and its transfer to target apoproteins. The sequence is that of Cytosolic Fe-S cluster assembly factor Nubp1 homolog from Drosophila melanogaster (Fruit fly).